The chain runs to 207 residues: Guanylate kinase (207 aa).

Residues 5 to 184 (GNLFIVSAPS…ALADLSAIIR (180 aa)) enclose the Guanylate kinase-like domain. 12-19 (APSGAGKS) is an ATP binding site. The interval 30–49 (PSDKQVSVSHTTRKPRPGEV) is disordered.

Belongs to the guanylate kinase family.

The protein resides in the cytoplasm. The catalysed reaction is GMP + ATP = GDP + ADP. Its function is as follows. Essential for recycling GMP and indirectly, cGMP. This is Guanylate kinase from Shewanella frigidimarina (strain NCIMB 400).